Here is a 255-residue protein sequence, read N- to C-terminus: Folate receptor beta (255 aa).

The N-terminal stretch at 1–16 (MVWKWMPLLLLLVCVA) is a signal peptide. Disulfide bonds link C31–C59, C51–C99, C60–C103, C83–C169, C90–C140, C129–C203, C133–C183, and C146–C163. Residues D97 and Y101 each contribute to the folate site. A glycan (N-linked (GlcNAc...) asparagine) is linked at N115. Residues 118 to 122 (WRKER), 151 to 156 (HRGWDW), and S190 each bind folate. N-linked (GlcNAc...) asparagine glycosylation is present at N195. A lipid anchor (GPI-anchor amidated asparagine) is attached at N230. Positions 231–255 (AGEMLHGTGGLLLSLALMLQLWLLG) are cleaved as a propeptide — removed in mature form.

The protein belongs to the folate receptor family. N-glycosylated. As to expression, expressed in placenta and hematopoietic cells. Expression is increased in malignant tissues.

Its subcellular location is the cell membrane. The protein resides in the secreted. Binds to folate and reduced folic acid derivatives and mediates delivery of 5-methyltetrahydrofolate and folate analogs into the interior of cells. Has high affinity for folate and folic acid analogs at neutral pH. Exposure to slightly acidic pH after receptor endocytosis triggers a conformation change that strongly reduces its affinity for folates and mediates their release. The polypeptide is Folate receptor beta (FOLR2) (Homo sapiens (Human)).